Here is a 408-residue protein sequence, read N- to C-terminus: MSDAPKKVVLAYSGGLDTSIILKWLQTEYGCEVITFTADLGQGEELEPARQKAELLGIKPENIHIVDVREEFVRDFVFPMFRANAVYEGLYLLGTSIARPLISKHLVEIAHQHGADAVAHGATGKGNDQVRFELSAYALDPSIKVIAPWREWDLTSRTKLIEFAEQNQIPIAKDKRGEAPFSVDANLLHTSSEGKALENPADEAPDYVYQRTVSPEDAPDQPEYIEVSFERGDAVAINGEALSPATILTALNEYGRKHGIGRLDFVENRFVGMKSRGIYETPGGTILLEAHRGIEQITLDSGAGHLKDSIMPRYAELIYNGFWYSPEREMLQALIDKSQEHVTGTVRLKLYKGGVHTVGRWSEHSLYSEKHVTFEDDAGAYDQKDAAGFIRLNALRLKLVANRNARFK.

Residues 11-19 (AYSGGLDTS) and A38 contribute to the ATP site. Positions 91 and 96 each coordinate L-citrulline. G121 contributes to the ATP binding site. L-aspartate contacts are provided by T123, N127, and D128. N127 is a binding site for L-citrulline. Residues R131, S182, S191, E267, and Y279 each coordinate L-citrulline.

The protein belongs to the argininosuccinate synthase family. Type 1 subfamily. In terms of assembly, homotetramer.

Its subcellular location is the cytoplasm. The catalysed reaction is L-citrulline + L-aspartate + ATP = 2-(N(omega)-L-arginino)succinate + AMP + diphosphate + H(+). It functions in the pathway amino-acid biosynthesis; L-arginine biosynthesis; L-arginine from L-ornithine and carbamoyl phosphate: step 2/3. The protein is Argininosuccinate synthase of Paracoccus denitrificans (strain Pd 1222).